The sequence spans 604 residues: Protein CBFA2T1 (604 aa).

Positions 32-114 (TEKHSTMPDS…SSSSLANQQL (83 aa)) are disordered. Residue Ser-41 is modified to Phosphoserine. Residues 63–86 (QGAPRTSSFTPTTLTNGTSHSPTA) show a composition bias toward polar residues. Over residues 95–114 (NGFSNGPSSSSSSSLANQQL) the composition is skewed to low complexity. Positions 120–215 (ARQLSKLKRF…NPAQYLAQHE (96 aa)) constitute a TAFH domain. The tract at residues 230–298 (SELLLDVNEN…LPHPTPPPPQ (69 aa)) is disordered. A compositionally biased stretch (basic and acidic residues) spans 238-264 (ENGKRRTPDRTKENGFDREPLHSEHPS). Polar residues predominate over residues 271 to 285 (SPGQRYSPNNGLSYQ). A compositionally biased stretch (pro residues) spans 289–298 (LPHPTPPPPQ). The interval 337–383 (QEEMIDHRLTDREWAEEWKHLDHLLNCIMDMVEKTRRSLTVLRRCQE) is important for oligomerization. Positions 337-383 (QEEMIDHRLTDREWAEEWKHLDHLLNCIMDMVEKTRRSLTVLRRCQE) are nervy homology region 2 (NHR2). The disordered stretch occupies residues 401–423 (DLKKGGGSSSSHSRQQSPVNPDP). Residue Ser-417 is modified to Phosphoserine. A nervy homology region 3 (NHR3) region spans residues 443–492 (EEIWKKAEEAVNEVKRQAMTELQKAVSEAERKAHDMITTERAKMERTVAE). The Zn(2+) site is built by Cys-515, Cys-518, Cys-526, Cys-529, Cys-535, Cys-539, His-547, and Cys-551. The MYND-type zinc-finger motif lies at 515–551 (CWNCGRKASETCSGCNTARYCGSFCQHKDWEKHHHIC). Over residues 557 to 576 (AQQQGDTPAVSSSVTPNSGA) the composition is skewed to polar residues. Positions 557-604 (AQQQGDTPAVSSSVTPNSGAGSPMDTPPAATPRSTTPGTPSTIETTPR) are disordered. The segment covering 587-604 (TPRSTTPGTPSTIETTPR) has biased composition (low complexity).

This sequence belongs to the CBFA2T family. Homooligomer. Homotetramerization is mediated by nervy homology region 2 (NRH2). Can interact with CBFA2T2 and CBFA2T3; heterotetramerization between members of the CBFA2T family is proposed. Interacts with TCF12, SIN3A, HDAC1, HDAC2, HDAC3, NCOR1, NCOR2. Interacts with ATN1 (via its N-terminus); the interaction enhances the transcriptional repression. Interacts (via its N-terminus) with ZBTB16; the interaction increases the transcription repression activity of ZBTB16. AML1-MTG8/ETO fusion protein interacts with CBFB. AML1-MTG8/ETO is part of a stable transcription factor complex AETFC in leukemic cells; AETFC formation seems to be involved in recruitment of EP300. AML1-MTG8/ETO nervy homology region 2-mediated oligomerization is proposed to be homotypic, required for AML1-MTG8/ETO-mediated transformation of primary hematopoietic cells and is required for AML1-MTG8/ETO interaction with TCF12. Most abundantly expressed in brain. Lower levels in lung, heart, testis and ovary.

The protein localises to the nucleus. Transcriptional corepressor which facilitates transcriptional repression via its association with DNA-binding transcription factors and recruitment of other corepressors and histone-modifying enzymes. Can repress the expression of MMP7 in a ZBTB33-dependent manner. Can repress transactivation mediated by TCF12. Acts as a negative regulator of adipogenesis. The AML1-MTG8/ETO fusion protein frequently found in leukemic cells is involved in leukemogenesis and contributes to hematopoietic stem/progenitor cell self-renewal. This chain is Protein CBFA2T1 (RUNX1T1), found in Homo sapiens (Human).